Reading from the N-terminus, the 188-residue chain is Peptide deformylase (188 aa).

Residues Cys-94 and His-136 each coordinate Fe cation. Glu-137 is a catalytic residue. His-140 contacts Fe cation.

The protein belongs to the polypeptide deformylase family. Fe(2+) serves as cofactor.

The enzyme catalyses N-terminal N-formyl-L-methionyl-[peptide] + H2O = N-terminal L-methionyl-[peptide] + formate. Functionally, removes the formyl group from the N-terminal Met of newly synthesized proteins. Requires at least a dipeptide for an efficient rate of reaction. N-terminal L-methionine is a prerequisite for activity but the enzyme has broad specificity at other positions. This chain is Peptide deformylase, found in Chlorobium phaeobacteroides (strain DSM 266 / SMG 266 / 2430).